The following is a 315-amino-acid chain: Voltage-dependent calcium channel gamma-3 subunit (315 aa).

A run of 4 helical transmembrane segments spans residues 8–28, 104–124, 135–155, and 181–201; these read VQMLITTVGAFAAFSLMTIAV, SSVFPILSVTLLFFGGLCVAA, ILSAGIFFVSAGLSNIIGIIV, and FGAFSFIIAEIVGVVAVHIYI. The disordered stretch occupies residues 232 to 252; the sequence is RRRSSSRSTEPRSRDLSPISK. Position 248 is a phosphoserine (Ser-248).

The protein belongs to the PMP-22/EMP/MP20 family. CACNG subfamily. As to quaternary structure, the L-type calcium channel is composed of five subunits: alpha-1, alpha-2/delta, beta and gamma. Acts as an auxiliary subunit for AMPA-selective glutamate receptors (AMPARs). Found in a complex with GRIA1, GRIA2, GRIA3, GRIA4, CNIH2, CNIH3, CACNG2, CACNG4, CACNG5, CACNG7 and CACNG8. Interacts with AP4M1 and GRIA1; associates GRIA1 with the adaptor protein complex 4 (AP-4) to target GRIA1 to the somatodendritic compartment of neurons.

It localises to the membrane. Functionally, regulates the trafficking and gating properties of AMPA-selective glutamate receptors (AMPARs). Promotes their targeting to the cell membrane and synapses and modulates their gating properties by slowing their rates of activation, deactivation and desensitization. Does not show subunit-specific AMPA receptor regulation and regulates all AMPAR subunits. Thought to stabilize the calcium channel in an inactivated (closed) state. In Bos taurus (Bovine), this protein is Voltage-dependent calcium channel gamma-3 subunit (CACNG3).